A 231-amino-acid polypeptide reads, in one-letter code: 5'-methylthioadenosine/S-adenosylhomocysteine nucleosidase (231 aa).

Glu-12 functions as the Proton acceptor in the catalytic mechanism. Residues Gly-78, Val-153, and 174–175 contribute to the substrate site; that span reads ME. Asp-198 serves as the catalytic Proton donor.

The protein belongs to the PNP/UDP phosphorylase family. MtnN subfamily.

The enzyme catalyses S-adenosyl-L-homocysteine + H2O = S-(5-deoxy-D-ribos-5-yl)-L-homocysteine + adenine. It catalyses the reaction S-methyl-5'-thioadenosine + H2O = 5-(methylsulfanyl)-D-ribose + adenine. It carries out the reaction 5'-deoxyadenosine + H2O = 5-deoxy-D-ribose + adenine. The protein operates within amino-acid biosynthesis; L-methionine biosynthesis via salvage pathway; S-methyl-5-thio-alpha-D-ribose 1-phosphate from S-methyl-5'-thioadenosine (hydrolase route): step 1/2. Functionally, catalyzes the irreversible cleavage of the glycosidic bond in both 5'-methylthioadenosine (MTA) and S-adenosylhomocysteine (SAH/AdoHcy) to adenine and the corresponding thioribose, 5'-methylthioribose and S-ribosylhomocysteine, respectively. Also cleaves 5'-deoxyadenosine, a toxic by-product of radical S-adenosylmethionine (SAM) enzymes, into 5-deoxyribose and adenine. In Vibrio atlanticus (strain LGP32) (Vibrio splendidus (strain Mel32)), this protein is 5'-methylthioadenosine/S-adenosylhomocysteine nucleosidase.